Here is a 105-residue protein sequence, read N- to C-terminus: MKMVRAILRPEWTEEVTDGLAEAGYYSLTKINVFGRGKQKGITVGDVHYDELAKTMIMMAVEDEAVDKVIKIISGKAYTGNMGDGKIFVNTIEAAYTISSGEKGL.

It belongs to the P(II) protein family.

Could be involved in the regulation of nitrogen fixation. The chain is Nitrogen fixation nifHD2 region GlnB-like protein 1 from Methanosarcina barkeri.